Here is a 107-residue protein sequence, read N- to C-terminus: Ribonuclease P protein subunit rpr2 (107 aa).

Positions 59, 62, 93, and 96 each coordinate Zn(2+).

The protein belongs to the eukaryotic/archaeal RNase P protein component 4 family. Requires Zn(2+) as cofactor.

It localises to the cytoplasm. It is found in the nucleus. It carries out the reaction Endonucleolytic cleavage of RNA, removing 5'-extranucleotides from tRNA precursor.. Its function is as follows. Component of ribonuclease P, a protein complex that generates mature tRNA molecules by cleaving their 5'-ends. This chain is Ribonuclease P protein subunit rpr2 (rpr2), found in Schizosaccharomyces pombe (strain 972 / ATCC 24843) (Fission yeast).